Reading from the N-terminus, the 340-residue chain is N-acetyl-gamma-glutamyl-phosphate reductase (340 aa).

Cys-146 is an active-site residue.

Belongs to the NAGSA dehydrogenase family. Type 1 subfamily.

Its subcellular location is the cytoplasm. It catalyses the reaction N-acetyl-L-glutamate 5-semialdehyde + phosphate + NADP(+) = N-acetyl-L-glutamyl 5-phosphate + NADPH + H(+). The protein operates within amino-acid biosynthesis; L-arginine biosynthesis; N(2)-acetyl-L-ornithine from L-glutamate: step 3/4. Catalyzes the NADPH-dependent reduction of N-acetyl-5-glutamyl phosphate to yield N-acetyl-L-glutamate 5-semialdehyde. In Rubrobacter xylanophilus (strain DSM 9941 / JCM 11954 / NBRC 16129 / PRD-1), this protein is N-acetyl-gamma-glutamyl-phosphate reductase.